Reading from the N-terminus, the 356-residue chain is Peptide chain release factor 1 (356 aa).

Gln235 is subject to N5-methylglutamine.

It belongs to the prokaryotic/mitochondrial release factor family. In terms of processing, methylated by PrmC. Methylation increases the termination efficiency of RF1.

The protein resides in the cytoplasm. Peptide chain release factor 1 directs the termination of translation in response to the peptide chain termination codons UAG and UAA. The sequence is that of Peptide chain release factor 1 from Mycobacteroides abscessus (strain ATCC 19977 / DSM 44196 / CCUG 20993 / CIP 104536 / JCM 13569 / NCTC 13031 / TMC 1543 / L948) (Mycobacterium abscessus).